Reading from the N-terminus, the 75-residue chain is Guanine nucleotide-binding protein G(I)/G(S)/G(O) subunit gamma-4 (75 aa).

Position 72 is a cysteine methyl ester (C72). C72 is lipidated: S-geranylgeranyl cysteine. The propeptide at 73–75 is removed in mature form; the sequence is TIL.

Belongs to the G protein gamma family. As to quaternary structure, g proteins are composed of 3 units, alpha, beta and gamma. Interacts with beta-1 and beta-2, but not with beta-3. Interacts with KCNK1. Interacts (via C-terminus) with KCNK2/TREK-1 (via N-terminus); this interaction confers ion selectivity to Cl(-) and L-glutamate. Brain.

The protein resides in the cell membrane. In terms of biological role, guanine nucleotide-binding proteins (G proteins) are involved as a modulator or transducer in various transmembrane signaling systems. The beta and gamma chains are required for the GTPase activity, for replacement of GDP by GTP, and for G protein-effector interaction. In Mus musculus (Mouse), this protein is Guanine nucleotide-binding protein G(I)/G(S)/G(O) subunit gamma-4 (Gng4).